A 58-amino-acid chain; its full sequence is Small ribosomal subunit protein bS21 (58 aa).

Residues 35–58 (REHYESPSVRRKKKSEAARKRRYK) form a disordered region. Basic residues predominate over residues 43 to 58 (VRRKKKSEAARKRRYK).

The protein belongs to the bacterial ribosomal protein bS21 family.

This is Small ribosomal subunit protein bS21 from Acetivibrio thermocellus (strain ATCC 27405 / DSM 1237 / JCM 9322 / NBRC 103400 / NCIMB 10682 / NRRL B-4536 / VPI 7372) (Clostridium thermocellum).